Consider the following 632-residue polypeptide: FAD-binding monooxygenase ausB (632 aa).

The interval 1–50 (MASAPEVESVKTPDPASTKTQHTSIAEIHTADQTWNNESNTRLPPNHRHH) is disordered. 2 stretches are compositionally biased toward polar residues: residues 15-24 (PASTKTQHTS) and 31-43 (ADQTWNNESNTRL). FAD is bound by residues 116–119 (TWYW), 128–129 (DI), and Y134. Residue 126-128 (MCD) coordinates NADP(+). NADP(+) contacts are provided by residues 269-275 (TGSTAIQ) and 292-293 (RT).

Belongs to the FAD-binding monooxygenase family. FAD serves as cofactor.

The catalysed reaction is protoaustinoid A + AH2 + O2 = berkeleyone A + A + H2O. Its pathway is secondary metabolite biosynthesis; terpenoid biosynthesis. FAD-binding monooxygenase; part of the gene cluster that mediates the biosynthesis of calidodehydroaustin, a fungal meroterpenoid. The first step of the pathway is the synthesis of 3,5-dimethylorsellinic acid by the polyketide synthase ausA. 3,5-dimethylorsellinic acid is then prenylated by the polyprenyl transferase ausN. Further epoxidation by the FAD-dependent monooxygenase ausM and cyclization by the probable terpene cyclase ausL lead to the formation of protoaustinoid A. Protoaustinoid A is then oxidized to spiro-lactone preaustinoid A3 by the combined action of the FAD-binding monooxygenases ausB and ausC, and the dioxygenase ausE. Acid-catalyzed keto-rearrangement and ring contraction of the tetraketide portion of preaustinoid A3 by ausJ lead to the formation of preaustinoid A4. The aldo-keto reductase ausK, with the help of ausH, is involved in the next step by transforming preaustinoid A4 into isoaustinone which is in turn hydroxylated by the P450 monooxygenase ausI to form austinolide. The cytochrome P450 monooxygenase ausG modifies austinolide to austinol. Austinol is further acetylated to austin by the O-acetyltransferase ausP, which spontaneously changes to dehydroaustin. The cytochrome P450 monooxygenase ausR then converts dehydroaustin is into 7-dehydrodehydroaustin. The hydroxylation catalyzed by ausR permits the O-acetyltransferase ausQ to add an additional acetyl group to the molecule, leading to the formation of acetoxydehydroaustin. The short chain dehydrogenase ausT catalyzes the reduction of the double bond present between carbon atoms 1 and 2 to convert 7-dehydrodehydroaustin into 1,2-dihydro-7-hydroxydehydroaustin. AusQ catalyzes not only an acetylation reaction but also the addition of the PKS ausV diketide product to 1,2-dihydro-7-hydroxydehydroaustin, forming precalidodehydroaustin. Finally, the iron/alpha-ketoglutarate-dependent dioxygenase converts precalidodehydroaustin into calidodehydroaustin. This chain is FAD-binding monooxygenase ausB, found in Aspergillus calidoustus.